Reading from the N-terminus, the 227-residue chain is Cytidylate kinase (227 aa).

Residue 12–20 participates in ATP binding; that stretch reads GPSGAGKGT.

It belongs to the cytidylate kinase family. Type 1 subfamily.

It localises to the cytoplasm. It carries out the reaction CMP + ATP = CDP + ADP. The catalysed reaction is dCMP + ATP = dCDP + ADP. In Marinomonas sp. (strain MWYL1), this protein is Cytidylate kinase.